The sequence spans 540 residues: MAKDPGRVLIFDTTLRDGEQSPGASLNLEEKLAIAQQLARLGVDVIEAGFPFASQGDFSAVQRIAQQVGGDEGPIICGLARASRADIKACADAVAPAPRRRIHTFIATSDIHLEHKLRKSRAEVLAIVPEMVAYARSLVDDVEFSCEDAARSDPEFLYEVIEAAIAAGAGTINIPDTVGFTTPSEFGALIAGIDCHVPNMNEAILSVHGHNDLGLAVANFLEAVKSGARQFECTINGIGERAGNAALEELVMALYVRRRYFNPFFGRESDSPTPLTAVRTEEITKTSRLVSNLTGMVVQPNKAIVGSNAFAHESGIHQDGVLKNRLTYEIVDARTVGLTDNRISLGKLSGRSAVRARLEELGYDLTREDLDEAFARFKDLADRKRDITDRDLEAIVSEQVQQPEARFQLRLVQVSCGSSLRPTATVILAQEDGQEQTAAAVGTGPVDAVCRALNALAGEPNELIEFSVKSVTEGIDAMGEVTIRLRRDGQLFSGHSADTDVVVAAAQAFVNALNRLVAGCGRQSLHPQHDAVLADRRPGI.

The Pyruvate carboxyltransferase domain occupies 8–271; it reads VLIFDTTLRD…NPFFGRESDS (264 aa). Mn(2+)-binding residues include Asp-17, His-208, His-210, and Asn-244. The segment at 408–540 is regulatory domain; the sequence is QLRLVQVSCG…AVLADRRPGI (133 aa).

Belongs to the alpha-IPM synthase/homocitrate synthase family. LeuA type 1 subfamily. Homodimer. Mn(2+) is required as a cofactor.

Its subcellular location is the cytoplasm. It catalyses the reaction 3-methyl-2-oxobutanoate + acetyl-CoA + H2O = (2S)-2-isopropylmalate + CoA + H(+). The protein operates within amino-acid biosynthesis; L-leucine biosynthesis; L-leucine from 3-methyl-2-oxobutanoate: step 1/4. Functionally, catalyzes the condensation of the acetyl group of acetyl-CoA with 3-methyl-2-oxobutanoate (2-ketoisovalerate) to form 3-carboxy-3-hydroxy-4-methylpentanoate (2-isopropylmalate). The chain is 2-isopropylmalate synthase from Prochlorococcus marinus (strain MIT 9303).